Here is a 540-residue protein sequence, read N- to C-terminus: GMP synthase [glutamine-hydrolyzing] (540 aa).

One can recognise a Glutamine amidotransferase type-1 domain in the interval K29–D222. The Nucleophile role is filled by C106. Residues H196 and E198 contribute to the active site. The GMPS ATP-PPase domain occupies W223–R415. S250 to A256 is a binding site for ATP.

In terms of assembly, homodimer.

The enzyme catalyses XMP + L-glutamine + ATP + H2O = GMP + L-glutamate + AMP + diphosphate + 2 H(+). The protein operates within purine metabolism; GMP biosynthesis; GMP from XMP (L-Gln route): step 1/1. In terms of biological role, catalyzes the synthesis of GMP from XMP. In Rhodopseudomonas palustris (strain ATCC BAA-98 / CGA009), this protein is GMP synthase [glutamine-hydrolyzing].